We begin with the raw amino-acid sequence, 402 residues long: Plasminogen activator inhibitor 1 (402 aa).

Residues 1–22 (MQMSSALACLILGLVLVSGKGF) form the signal peptide. N-linked (GlcNAc...) asparagine glycosylation is found at N232, N288, and N352.

The protein belongs to the serpin family. Forms a heterodimer with TMPRSS7. Interacts with VTN. Binds LRP1B; binding is followed by internalization and degradation. Interacts with PPP1CB. In complex with PLAU/uPA, interacts with PLAUR/uPAR. Interacts with SORL1 and LRP1, either alone or in complex with PLAU; these interactions are abolished in the presence of LRPAP1/RAP. The ternary complex composed of PLAUR-PLAU-PAI1 also interacts with SORL1. Interacts with PLAT/tPA. Also interacts with SORL1, when complexed to PLAT/tPA.

It is found in the secreted. In terms of biological role, serine protease inhibitor. Inhibits TMPRSS7. Is a primary inhibitor of tissue-type plasminogen activator (PLAT) and urokinase-type plasminogen activator (PLAU). As PLAT inhibitor, it is required for fibrinolysis down-regulation and is responsible for the controlled degradation of blood clots. As PLAU inhibitor, it is involved in the regulation of cell adhesion and spreading. Acts as a regulator of cell migration, independently of its role as protease inhibitor. It is required for stimulation of keratinocyte migration during cutaneous injury repair. Involved in cellular and replicative senescence. Plays a role in alveolar type 2 cells senescence in the lung. Is involved in the regulation of cementogenic differentiation of periodontal ligament stem cells, and regulates odontoblast differentiation and dentin formation during odontogenesis. The protein is Plasminogen activator inhibitor 1 (Serpine1) of Mus musculus (Mouse).